Here is a 59-residue protein sequence, read N- to C-terminus: Large ribosomal subunit protein uL30 (59 aa).

Belongs to the universal ribosomal protein uL30 family. Part of the 50S ribosomal subunit.

In Desulforamulus reducens (strain ATCC BAA-1160 / DSM 100696 / MI-1) (Desulfotomaculum reducens), this protein is Large ribosomal subunit protein uL30.